An 86-amino-acid chain; its full sequence is Cell division topological specificity factor (86 aa).

It belongs to the MinE family.

Functionally, prevents the cell division inhibition by proteins MinC and MinD at internal division sites while permitting inhibition at polar sites. This ensures cell division at the proper site by restricting the formation of a division septum at the midpoint of the long axis of the cell. In Shewanella pealeana (strain ATCC 700345 / ANG-SQ1), this protein is Cell division topological specificity factor.